Consider the following 77-residue polypeptide: Chassatide C2 (77 aa).

Positions 1–24 (MAKFANYLMLFLLVASLVMLEAQS) are cleaved as a signal peptide. Residues 25–44 (SDTIKVPDLGKRLLMNRDPN) constitute a propeptide, removed in mature form. Residues 45 to 75 (GIPCAESCVWIPCTITALMGCSCKNNVCYNN) constitute a cross-link (cyclopeptide (Gly-Asn)). Intrachain disulfides connect Cys-48–Cys-65, Cys-52–Cys-67, and Cys-57–Cys-72. Residue Met-63 is modified to Methionine sulfoxide; in form chassatide chaC2A. Positions 76–77 (EL) are cleaved as a propeptide — removed in mature form.

The protein belongs to the cyclotide family. Bracelet subfamily. In terms of processing, this is a cyclic peptide. In terms of tissue distribution, expressed in fruit, pedicel and stem but not in leaf and root (at protein level).

Functionally, chassatide C2: Probably participates in a plant defense mechanism. Has no activity against bacteria up to a concentration of 80 uM. Has cytotoxic but no hemolytic activity. Chassatide C2A: Probably participates in a plant defense mechanism. Has no activity against bacteria up to a concentration of 80 uM. Has no cytotoxic and no hemolytic activity. The polypeptide is Chassatide C2 (Chassalia chartacea (Chassalia curviflora)).